A 371-amino-acid chain; its full sequence is Chaperone protein DnaJ (371 aa).

The 65-residue stretch at aspartate 5–glycine 69 folds into the J domain. The segment at glycine 133 to arginine 215 adopts a CR-type zinc-finger fold. Zn(2+) is bound by residues cysteine 146, cysteine 149, cysteine 163, cysteine 166, cysteine 189, cysteine 192, cysteine 203, and cysteine 206. 4 CXXCXGXG motif repeats span residues cysteine 146–glycine 153, cysteine 163–glycine 170, cysteine 189–glycine 196, and cysteine 203–glycine 210.

It belongs to the DnaJ family. Homodimer. Requires Zn(2+) as cofactor.

Its subcellular location is the cytoplasm. In terms of biological role, participates actively in the response to hyperosmotic and heat shock by preventing the aggregation of stress-denatured proteins and by disaggregating proteins, also in an autonomous, DnaK-independent fashion. Unfolded proteins bind initially to DnaJ; upon interaction with the DnaJ-bound protein, DnaK hydrolyzes its bound ATP, resulting in the formation of a stable complex. GrpE releases ADP from DnaK; ATP binding to DnaK triggers the release of the substrate protein, thus completing the reaction cycle. Several rounds of ATP-dependent interactions between DnaJ, DnaK and GrpE are required for fully efficient folding. Also involved, together with DnaK and GrpE, in the DNA replication of plasmids through activation of initiation proteins. The sequence is that of Chaperone protein DnaJ from Bacillus cereus (strain 03BB102).